Reading from the N-terminus, the 485-residue chain is Protein DETOXIFICATION 8 (485 aa).

Residues 1-26 (MENGFSLVPKEEEEEEDYSNEKSEDQ) are disordered. A run of 12 helical transmembrane segments spans residues 41–61 (FMAA…VISI), 74–94 (AVAI…FGLA), 118–138 (YGSM…WVFM), 159–179 (SIWL…TRFF), 188–208 (LFLS…LLVY), 212–232 (FGIV…VGLL), 263–283 (LAIP…LLIL), 297–317 (VLSI…AIGA), 338–358 (AANS…ISLY), 381–401 (ITPF…LSGV), 414–434 (ANIG…CFVV), and 442–462 (WIGI…VTFF).

Belongs to the multi antimicrobial extrusion (MATE) (TC 2.A.66.1) family.

The protein resides in the membrane. This chain is Protein DETOXIFICATION 8, found in Arabidopsis thaliana (Mouse-ear cress).